An 88-amino-acid polypeptide reads, in one-letter code: Phosphocarrier protein HPr (88 aa).

Positions 1-88 constitute an HPr domain; that stretch reads MEQNSYVIID…DVLSKEGLTK (88 aa). The active-site Pros-phosphohistidine intermediate is the histidine 15. Serine 46 carries the post-translational modification Phosphoserine; by HPrK/P.

The protein resides in the cytoplasm. Its activity is regulated as follows. Phosphorylation on Ser-46 inhibits the phosphoryl transfer from enzyme I to HPr. In terms of biological role, general (non sugar-specific) component of the phosphoenolpyruvate-dependent sugar phosphotransferase system (sugar PTS). This major carbohydrate active-transport system catalyzes the phosphorylation of incoming sugar substrates concomitantly with their translocation across the cell membrane. The phosphoryl group from phosphoenolpyruvate (PEP) is transferred to the phosphoryl carrier protein HPr by enzyme I. Phospho-HPr then transfers it to the PTS EIIA domain. Functionally, P-Ser-HPr interacts with the catabolite control protein A (CcpA), forming a complex that binds to DNA at the catabolite response elements cre, operator sites preceding a large number of catabolite-regulated genes. Thus, P-Ser-HPr is a corepressor in carbon catabolite repression (CCR), a mechanism that allows bacteria to coordinate and optimize the utilization of available carbon sources. P-Ser-HPr also plays a role in inducer exclusion, in which it probably interacts with several non-PTS permeases and inhibits their transport activity. This Staphylococcus aureus (strain MSSA476) protein is Phosphocarrier protein HPr (ptsH).